Reading from the N-terminus, the 434-residue chain is uncharacterized protein (434 aa).

5 consecutive transmembrane segments (helical) span residues 27 to 47 (IFLL…QSVI), 64 to 84 (FYLS…FVNW), 244 to 264 (IILA…ATVL), 289 to 309 (VPVN…PSLL), and 387 to 407 (LILT…GAVF).

It belongs to the CbiQ family.

It localises to the cell membrane. This is an uncharacterized protein from Mycoplasma pneumoniae (strain ATCC 29342 / M129 / Subtype 1) (Mycoplasmoides pneumoniae).